The following is a 134-amino-acid chain: uncharacterized protein (134 aa).

The signal sequence occupies residues methionine 1 to alanine 16.

This is an uncharacterized protein from Oryza sativa subsp. indica (Rice).